A 443-amino-acid polypeptide reads, in one-letter code: Glutamate-1-semialdehyde 2,1-aminomutase (443 aa).

The span at 1–16 (MSVNADSQHSNNSSHQ) shows a compositional bias: low complexity. Residues 1-22 (MSVNADSQHSNNSSHQASEKAF) form a disordered region. An N6-(pyridoxal phosphate)lysine modification is found at lysine 277.

This sequence belongs to the class-III pyridoxal-phosphate-dependent aminotransferase family. HemL subfamily. As to quaternary structure, homodimer. It depends on pyridoxal 5'-phosphate as a cofactor.

The protein resides in the cytoplasm. It catalyses the reaction (S)-4-amino-5-oxopentanoate = 5-aminolevulinate. Its pathway is porphyrin-containing compound metabolism; protoporphyrin-IX biosynthesis; 5-aminolevulinate from L-glutamyl-tRNA(Glu): step 2/2. The protein is Glutamate-1-semialdehyde 2,1-aminomutase of Corynebacterium jeikeium (strain K411).